A 142-amino-acid chain; its full sequence is Small ribosomal subunit protein uS11c (142 aa).

It belongs to the universal ribosomal protein uS11 family. As to quaternary structure, part of the 30S ribosomal subunit.

The protein resides in the plastid. The protein localises to the chloroplast. This is Small ribosomal subunit protein uS11c from Welwitschia mirabilis (Tree tumbo).